A 231-amino-acid chain; its full sequence is MAKLSKRVKAFKAKVDRTKAYPFDNALALIKECASAKFNESIDVSVQLGVDAKKSDQVVRGSVVLPAGTGKDVRVAVFATGEKAEQAKAAGADIVGMEDLAESIKAGNMPFDIVIASPDTMRIVGTLGQILGPRGMMPNPKVGTVTPDVATAVKNAKAGQVQYRTDKAGIIHATIGRKSFTDEALKSNLLALIDALTKAKPATSKGVYLRKVSLSSTMGAGVRIDQTTLAA.

The protein belongs to the universal ribosomal protein uL1 family. Part of the 50S ribosomal subunit.

Binds directly to 23S rRNA. The L1 stalk is quite mobile in the ribosome, and is involved in E site tRNA release. Functionally, protein L1 is also a translational repressor protein, it controls the translation of the L11 operon by binding to its mRNA. This Herminiimonas arsenicoxydans protein is Large ribosomal subunit protein uL1.